The primary structure comprises 388 residues: Alanine racemase (388 aa).

The active-site Proton acceptor; specific for D-alanine is the lysine 44. Position 44 is an N6-(pyridoxal phosphate)lysine (lysine 44). Residue arginine 142 coordinates substrate. Catalysis depends on tyrosine 273, which acts as the Proton acceptor; specific for L-alanine. Methionine 321 serves as a coordination point for substrate.

Belongs to the alanine racemase family. Requires pyridoxal 5'-phosphate as cofactor.

It catalyses the reaction L-alanine = D-alanine. It functions in the pathway amino-acid biosynthesis; D-alanine biosynthesis; D-alanine from L-alanine: step 1/1. Catalyzes the interconversion of L-alanine and D-alanine. May also act on other amino acids. In Mycobacterium avium (strain 104), this protein is Alanine racemase (alr).